The sequence spans 720 residues: Zinc finger protein 408 (720 aa).

Residues 201–350 (VQQEVASPGE…GPAGSSPKQG (150 aa)) form a disordered region. A compositionally biased stretch (polar residues) spans 275–285 (LQSNSATQQDP). Residues 287–296 (GSGASFSSSA) show a composition bias toward low complexity. Threonine 322 is subject to Phosphothreonine. C2H2-type zinc fingers lie at residues 353–375 (YRCG…AFVH), 381–403 (FLCT…MLGH), 409–431 (FPCP…QVVH), 437–459 (FACD…RKTH), 468–490 (CPCP…MRLH), 496–518 (FLCP…LRLH), 524–546 (YRCP…LISH), 551–573 (HLCP…ERLH), 579–601 (FPCP…LKSH), and 607–629 (YRCP…QLSH).

Highest expression is observed in adult retina; abundantly expressed in the fetal eye. In the retina, it is detected in the outer nuclear layer, especially cone and rod photoreceptor cells, ganglion cell layer and both outer and inner plexiform layers (at protein level). Expressed in retinal blood vessels (at protein level).

Its subcellular location is the nucleus. Functionally, may be involved in transcriptional regulation. The polypeptide is Zinc finger protein 408 (ZNF408) (Homo sapiens (Human)).